Here is a 256-residue protein sequence, read N- to C-terminus: 5-oxoprolinase subunit A (256 aa).

This sequence belongs to the LamB/PxpA family. As to quaternary structure, forms a complex composed of PxpA, PxpB and PxpC.

It catalyses the reaction 5-oxo-L-proline + ATP + 2 H2O = L-glutamate + ADP + phosphate + H(+). In terms of biological role, catalyzes the cleavage of 5-oxoproline to form L-glutamate coupled to the hydrolysis of ATP to ADP and inorganic phosphate. This Alkaliphilus metalliredigens (strain QYMF) protein is 5-oxoprolinase subunit A.